Consider the following 155-residue polypeptide: Low molecular weight phosphotyrosine protein phosphatase 1 (155 aa).

Cysteine 9 functions as the Nucleophile in the catalytic mechanism. Arginine 15 is an active-site residue. Catalysis depends on aspartate 124, which acts as the Proton donor.

The protein belongs to the low molecular weight phosphotyrosine protein phosphatase family. As to expression, cone cells and primary pigment cells in developing pupal retina.

The protein localises to the cytoplasm. It carries out the reaction O-phospho-L-tyrosyl-[protein] + H2O = L-tyrosyl-[protein] + phosphate. It catalyses the reaction a phosphate monoester + H2O = an alcohol + phosphate. Acts on tyrosine phosphorylated proteins, low-MW aryl phosphates and natural and synthetic acyl phosphates. The chain is Low molecular weight phosphotyrosine protein phosphatase 1 (primo-1) from Drosophila melanogaster (Fruit fly).